The following is a 66-amino-acid chain: DNA gyrase inhibitor YacG (66 aa).

Positions 9, 12, 28, and 32 each coordinate Zn(2+). The segment at 45-66 (HKIAGSQESEDELYSGDLEPRH) is disordered.

It belongs to the DNA gyrase inhibitor YacG family. In terms of assembly, interacts with GyrB. It depends on Zn(2+) as a cofactor.

Inhibits all the catalytic activities of DNA gyrase by preventing its interaction with DNA. Acts by binding directly to the C-terminal domain of GyrB, which probably disrupts DNA binding by the gyrase. The sequence is that of DNA gyrase inhibitor YacG from Pseudomonas putida (strain W619).